We begin with the raw amino-acid sequence, 708 residues long: Polyribonucleotide nucleotidyltransferase (708 aa).

The Mg(2+) site is built by aspartate 488 and aspartate 494. A KH domain is found at 555-614; sequence PRIYTMKIPQKKIAEVIGKGGATIRQLTEETGTTIEIGDDGTIKIAATDGESAANAISRI. In terms of domain architecture, S1 motif spans 624-692; the sequence is GTIYEGKVVR…RQGRVRLSIK (69 aa).

This sequence belongs to the polyribonucleotide nucleotidyltransferase family. In terms of assembly, component of the RNA degradosome, which is a multiprotein complex involved in RNA processing and mRNA degradation. Mg(2+) serves as cofactor.

The protein localises to the cytoplasm. The catalysed reaction is RNA(n+1) + phosphate = RNA(n) + a ribonucleoside 5'-diphosphate. Its function is as follows. Involved in mRNA degradation. Catalyzes the phosphorolysis of single-stranded polyribonucleotides processively in the 3'- to 5'-direction. The polypeptide is Polyribonucleotide nucleotidyltransferase (Pseudoalteromonas translucida (strain TAC 125)).